The chain runs to 130 residues: Cytochrome c oxidase subunit 13, mitochondrial (130 aa).

Residues 1–31 constitute a mitochondrion transit peptide; that stretch reads MSMMNRNIGFLSRTLKTSVPKRAGLLSFRAY. Over 32 to 61 the chain is Mitochondrial matrix; that stretch reads SNEAKVNWLEEVQAEEEHAKRSSEFWKKVT. The helical transmembrane segment at 62–80 threads the bilayer; it reads YYIGGPALILASANAYYIY. The Mitochondrial intermembrane portion of the chain corresponds to 81–130; it reads CKHQEHAKHVEDTDPGYSFENLRFKKYPWGDGSKTLFWNDKVNHLKKDDE.

It belongs to the cytochrome c oxidase subunit 6A family. In terms of assembly, component of the cytochrome c oxidase (complex IV, CIV), a multisubunit enzyme composed of a catalytic core of 3 subunits and several supernumerary subunits. The complex exists as a monomer or a dimer and forms supercomplexes (SCs) in the inner mitochondrial membrane with ubiquinol-cytochrome c oxidoreductase (cytochrome b-c1 complex, complex III, CIII).

The protein localises to the mitochondrion inner membrane. Its pathway is energy metabolism; oxidative phosphorylation. Functionally, component of the cytochrome c oxidase, the last enzyme in the mitochondrial electron transport chain which drives oxidative phosphorylation. The respiratory chain contains 3 multisubunit complexes succinate dehydrogenase (complex II, CII), ubiquinol-cytochrome c oxidoreductase (cytochrome b-c1 complex, complex III, CIII) and cytochrome c oxidase (complex IV, CIV), that cooperate to transfer electrons derived from NADH and succinate to molecular oxygen, creating an electrochemical gradient over the inner membrane that drives transmembrane transport and the ATP synthase. Cytochrome c oxidase is the component of the respiratory chain that catalyzes the reduction of oxygen to water. Electrons originating from reduced cytochrome c in the intermembrane space (IMS) are transferred via the dinuclear copper A center (CU(A)) of subunit 2 and heme A of subunit 1 to the active site in subunit 1, a binuclear center (BNC) formed by heme A3 and copper B (CU(B)). The BNC reduces molecular oxygen to 2 water molecules unsing 4 electrons from cytochrome c in the IMS and 4 protons from the mitochondrial matrix. The sequence is that of Cytochrome c oxidase subunit 13, mitochondrial (cox13) from Schizosaccharomyces pombe (strain 972 / ATCC 24843) (Fission yeast).